The following is a 305-amino-acid chain: Probable DNA-invertase y4cG (305 aa).

In terms of domain architecture, Resolvase/invertase-type recombinase catalytic spans 15-148 (RLIGYARVST…SGMQAAKARG (134 aa)). The active-site O-(5'-phospho-DNA)-serine intermediate is the Ser-23.

It belongs to the site-specific recombinase resolvase family.

The chain is Probable DNA-invertase y4cG from Sinorhizobium fredii (strain NBRC 101917 / NGR234).